A 360-amino-acid polypeptide reads, in one-letter code: uncharacterized protein (360 aa).

In terms of domain architecture, THUMP spans 45–148 (EDIEDKILQI…KNKTYVSITP (104 aa)).

This is an uncharacterized protein from Methanocaldococcus jannaschii (strain ATCC 43067 / DSM 2661 / JAL-1 / JCM 10045 / NBRC 100440) (Methanococcus jannaschii).